Here is a 130-residue protein sequence, read N- to C-terminus: Large ribosomal subunit protein bL17 (130 aa).

It belongs to the bacterial ribosomal protein bL17 family. As to quaternary structure, part of the 50S ribosomal subunit. Contacts protein L32.

The polypeptide is Large ribosomal subunit protein bL17 (Shewanella loihica (strain ATCC BAA-1088 / PV-4)).